Here is a 204-residue protein sequence, read N- to C-terminus: High frequency lysogenization protein HflD homolog (204 aa).

This sequence belongs to the HflD family.

It is found in the cytoplasm. The protein localises to the cell inner membrane. In Aeromonas hydrophila subsp. hydrophila (strain ATCC 7966 / DSM 30187 / BCRC 13018 / CCUG 14551 / JCM 1027 / KCTC 2358 / NCIMB 9240 / NCTC 8049), this protein is High frequency lysogenization protein HflD homolog.